Here is a 548-residue protein sequence, read N- to C-terminus: MKKVTAMLFSMAVGLNAVSMAAKAKASEEQETDVLLIGGGIMSATLGTYLRELEPEWSMTMLERLEGVAQESSNGWNNAGTGHSALMELNYTPQNADGSISIEKAVAINEAFQISRQFWAHQVERGVLRTPRSFINTVPHMSFVWGEDNVNFLRARYAALQQSSLFRGMRYSEDHAQIKEWAPLVMEGRDPQQKVAATRTEIGTDVNYGEITRQLIASLQKKSNFSLQLSSEVRALKRNDDNTWTVTVADLKNGTAQNIRAKFVFIGAGGAALKLLQESGIPEAKDYAGFPVGGQFLVSENPDVVNHHLAKVYGKASVGAPPMSVPHIDTRVLDGKRVVLFGPFATFSTKFLKNGSLWDLMSSTTTSNVMPMMHVGLDNFDLVKYLVSQVMLSEEDRFEALKEYYPQAKKEDWRLWQAGQRVQIIKRDADKGGVLRLGTEVVSDQQGTIAALLGASPGASTAAPIMLDLLEKVFGDRVSSPQWQATLKAIVPSYGRKLNGDVAATERELQYTSEVLGLKYDKPQAADSTPKPQLKPQPVQKEVADIAL.

The tract at residues 521-548 (DKPQAADSTPKPQLKPQPVQKEVADIAL) is disordered. The span at 530–541 (PKPQLKPQPVQK) shows a compositional bias: low complexity.

This sequence belongs to the MQO family. Requires FAD as cofactor.

The enzyme catalyses (S)-malate + a quinone = a quinol + oxaloacetate. Its pathway is carbohydrate metabolism; tricarboxylic acid cycle; oxaloacetate from (S)-malate (quinone route): step 1/1. This Shigella boydii serotype 4 (strain Sb227) protein is Probable malate:quinone oxidoreductase.